Reading from the N-terminus, the 116-residue chain is Secreted RxLR effector protein 9 (116 aa).

Residues 1 to 17 form the signal peptide; it reads MRLIYIFMVSIVTTLHA. Positions 49–64 match the RxLR-dEER motif; the sequence is RILRGTDGNVNREQER.

Belongs to the RxLR effector family.

The protein resides in the secreted. The protein localises to the host cytoplasm. It is found in the host nucleus. Its function is as follows. Effector that acts as a broad suppressor of cell death to interrupt plant immunity. Inhibits cell death induced by cell death-inducing proteins, including the PAMP elicitor INF1 from P.infestans. The sequence is that of Secreted RxLR effector protein 9 from Plasmopara viticola (Downy mildew of grapevine).